The sequence spans 209 residues: Putative BTB/POZ domain-containing protein At2g40450 (209 aa).

Residues 24–98 enclose the BTB domain; it reads ADVRLKAGDS…IYRVDGSICS (75 aa).

It participates in protein modification; protein ubiquitination. Its function is as follows. May act as a substrate-specific adapter of an E3 ubiquitin-protein ligase complex (CUL3-RBX1-BTB) which mediates the ubiquitination and subsequent proteasomal degradation of target proteins. This is Putative BTB/POZ domain-containing protein At2g40450 from Arabidopsis thaliana (Mouse-ear cress).